Here is a 423-residue protein sequence, read N- to C-terminus: Phosphoribosylamine--glycine ligase (423 aa).

The ATP-grasp domain occupies 107–314; sequence KAFMAKYNIP…LSDLVEAAID (208 aa). 133-194 is a binding site for ATP; sequence VNQKGAPIVI…EDFLQGEEAS (62 aa). Mg(2+) contacts are provided by Glu-284 and Asn-286.

This sequence belongs to the GARS family. It depends on Mg(2+) as a cofactor. Mn(2+) is required as a cofactor.

It carries out the reaction 5-phospho-beta-D-ribosylamine + glycine + ATP = N(1)-(5-phospho-beta-D-ribosyl)glycinamide + ADP + phosphate + H(+). The protein operates within purine metabolism; IMP biosynthesis via de novo pathway; N(1)-(5-phospho-D-ribosyl)glycinamide from 5-phospho-alpha-D-ribose 1-diphosphate: step 2/2. This Neisseria meningitidis serogroup B (strain ATCC BAA-335 / MC58) protein is Phosphoribosylamine--glycine ligase.